Here is a 436-residue protein sequence, read N- to C-terminus: Chromosomal replication initiator protein DnaA (436 aa).

The interval 1-69 is domain I, interacts with DnaA modulators; sequence MLADEVLELL…AHLFEVKTGT (69 aa). The interval 69-99 is domain II; the sequence is TKPNVEITTQTKLKSSKQNQVNIKQIKAQST. The interval 100–314 is domain III, AAA+ region; it reads LLNPAYTFEN…SAIINLNAYA (215 aa). Residues glycine 144, glycine 146, lysine 147, and threonine 148 each contribute to the ATP site. A domain IV, binds dsDNA region spans residues 315 to 436; sequence NLMRQEITLD…ELKNKILTKG (122 aa).

Belongs to the DnaA family. Oligomerizes as a right-handed, spiral filament on DNA at oriC.

It is found in the cytoplasm. Plays an essential role in the initiation and regulation of chromosomal replication. ATP-DnaA binds to the origin of replication (oriC) to initiate formation of the DNA replication initiation complex once per cell cycle. Binds the DnaA box (a 9 base pair repeat at the origin) and separates the double-stranded (ds)DNA. Forms a right-handed helical filament on oriC DNA; dsDNA binds to the exterior of the filament while single-stranded (ss)DNA is stabiized in the filament's interior. The ATP-DnaA-oriC complex binds and stabilizes one strand of the AT-rich DNA unwinding element (DUE), permitting loading of DNA polymerase. After initiation quickly degrades to an ADP-DnaA complex that is not apt for DNA replication. Binds acidic phospholipids. This Campylobacter curvus (strain 525.92) protein is Chromosomal replication initiator protein DnaA.